Here is a 424-residue protein sequence, read N- to C-terminus: Protein CLP1 homolog 5 (424 aa).

Residues glutamate 16, threonine 56, and 124-129 (DSGKST) each bind ATP.

The protein belongs to the Clp1 family. Clp1 subfamily. Forms a complex with cleavage and polyadenylation specificity factor (CPSF) subunits PCFS1, FIPS3 and CPSF30.

The protein resides in the nucleus. Its function is as follows. Required for endonucleolytic cleavage during polyadenylation-dependent pre-mRNA 3'-end formation. This Arabidopsis thaliana (Mouse-ear cress) protein is Protein CLP1 homolog 5.